Consider the following 24-residue polypeptide: Glutamate dehydrogenase (24 aa).

Belongs to the Glu/Leu/Phe/Val dehydrogenases family. Homohexamer.

Its subcellular location is the cytoplasm. The catalysed reaction is L-glutamate + NAD(+) + H2O = 2-oxoglutarate + NH4(+) + NADH + H(+). The enzyme catalyses L-glutamate + NADP(+) + H2O = 2-oxoglutarate + NH4(+) + NADPH + H(+). This chain is Glutamate dehydrogenase (gdhA), found in Pyrococcus woesei.